Here is a 294-residue protein sequence, read N- to C-terminus: Elongation factor Ts (294 aa).

Positions 81 to 84 (TDFV) are involved in Mg(2+) ion dislocation from EF-Tu.

It belongs to the EF-Ts family.

It localises to the cytoplasm. Its function is as follows. Associates with the EF-Tu.GDP complex and induces the exchange of GDP to GTP. It remains bound to the aminoacyl-tRNA.EF-Tu.GTP complex up to the GTP hydrolysis stage on the ribosome. This chain is Elongation factor Ts (tsf), found in Mycoplasmopsis pulmonis (strain UAB CTIP) (Mycoplasma pulmonis).